A 302-amino-acid chain; its full sequence is Putative cyclin-D6-1 (302 aa).

This sequence belongs to the cyclin family. Cyclin D subfamily.

This is Putative cyclin-D6-1 (CYCD6-1) from Arabidopsis thaliana (Mouse-ear cress).